The sequence spans 312 residues: Gamma-soluble NSF attachment protein (312 aa).

The tract at residues 281 to 312 (KKKAAAPPQAKPEGTAAPAAEEEEDEYAGGLC) is disordered. Low complexity predominate over residues 285–299 (AAPPQAKPEGTAAPA). Residues 300-312 (AEEEEDEYAGGLC) are compositionally biased toward acidic residues.

It belongs to the SNAP family. In terms of assembly, interacts with RAB11FIP5. Interacts with VTI1A.

The protein localises to the membrane. It is found in the golgi apparatus. Functionally, required for vesicular transport between the endoplasmic reticulum and the Golgi apparatus. In Bos taurus (Bovine), this protein is Gamma-soluble NSF attachment protein.